Consider the following 424-residue polypeptide: Hemagglutinin-esterase (424 aa).

The first 16 residues, 1–16 (MFLLPRFVLVSCIIGS), serve as a signal peptide directing secretion. An esterase domain 1 region spans residues 7-127 (FVLVSCIIGS…SNDIWMQNKG (121 aa)). Residues 17–392 (LGFDNPPTNV…PICVYDPLPL (376 aa)) lie on the Virion surface side of the membrane. Ser40 serves as the catalytic Nucleophile. An intrachain disulfide couples Cys44 to Cys65. Residues Asn54, Asn89, Asn153, Asn236, and Asn301 are each glycosylated (N-linked (GlcNAc...) asparagine; by host). 3 cysteine pairs are disulfide-bonded: Cys113-Cys162, Cys197-Cys276, and Cys205-Cys249. The tract at residues 128–266 (LFYTQVYKNM…GNYLAISNEL (139 aa)) is receptor binding. Residues 267-379 (LLTVPTKAIC…RCPTAADINN (113 aa)) are esterase domain 2. An intrachain disulfide couples Cys307 to Cys312. Asn316 is a glycosylation site (N-linked (GlcNAc...) asparagine; by host). Catalysis depends on charge relay system residues Asp326 and His329. Cys347 and Cys371 are joined by a disulfide. N-linked (GlcNAc...) asparagine; by host glycosylation occurs at Asn358. The helical transmembrane segment at 393–413 (ILLGILLGVAVIIIVVLLLYF) threads the bilayer. Topologically, residues 414–424 (MVDNGTRLHDA) are intravirion. An N-linked (GlcNAc...) asparagine; by host glycan is attached at Asn417.

This sequence belongs to the influenza type C/coronaviruses hemagglutinin-esterase family. In terms of assembly, homodimer; disulfide-linked. Forms a complex with the M protein in the pre-Golgi. Associates then with S-M complex to form a ternary complex S-M-HE. Post-translationally, N-glycosylated in the host RER.

The protein localises to the virion membrane. The protein resides in the host cell membrane. It carries out the reaction N-acetyl-9-O-acetylneuraminate + H2O = N-acetylneuraminate + acetate + H(+). The catalysed reaction is N-acetyl-4-O-acetylneuraminate + H2O = N-acetylneuraminate + acetate + H(+). Functionally, structural protein that makes short spikes at the surface of the virus. Contains receptor binding and receptor-destroying activities. Mediates de-O-acetylation of N-acetyl-4-O-acetylneuraminic acid, which is probably the receptor determinant recognized by the virus on the surface of erythrocytes and susceptible cells. This receptor-destroying activity is important for virus release as it probably helps preventing self-aggregation and ensures the efficient spread of the progeny virus from cell to cell. May serve as a secondary viral attachment protein for initiating infection, the spike protein being the major one. May become a target for both the humoral and the cellular branches of the immune system. This is Hemagglutinin-esterase from Bovine coronavirus (strain LY-138) (BCoV).